Consider the following 342-residue polypeptide: Nucleoid-associated protein Shewmr7_2293 (342 aa).

It belongs to the YejK family.

It localises to the cytoplasm. Its subcellular location is the nucleoid. This chain is Nucleoid-associated protein Shewmr7_2293, found in Shewanella sp. (strain MR-7).